A 553-amino-acid polypeptide reads, in one-letter code: MVSHKVLEFGDDGYKLPAQARAPRSLRKKRIYEKKIPGDDKMCAIDLLATVAGSLLLESKSPVNACLVVQNTVKNEYPADENPVKAVPYSESPSLFDNGKCGFSSVITNPNHLLVGDKVGKEVEGFSSLGVSGDVKPDVVASIGSNSSTEVGACGNGSPNESRDDVNLFSRNDDDENFSGYIRTRMTRPVPRIGDRRIRKILASRHWKGGSKNNTDAKPWYCSKRSYYLHHHQRSYPIKKRKYFDSVYDSNSDDYRLQGKTHKGSRTISSMKSRNASFVSRDHHVKLRIKSFRVPELFVEIPETATVGSLKRMVMEAVTTILGDGLRVGLMVQGKKVRDDGKTLLQTGISEENNHLDSLGFSLEPSLETTPQPLLSSYLSDHACDDVTLCHDNALDSSHEPEPSPADSFGKLGTSDHSRALIPVASAAMLAPRPPNRKFKRTEQQLAAQRRIRRPFSVTEVEALVQAVEKLGTGRWRDVKVRAFEDADHRTYVDLKDKWKTLVHTARISPQQRRGEPVPQELLDRVLKAHAYWSQHLMHQLQTEPPSTQVEAL.

Residues 147 to 170 form a disordered region; the sequence is SSTEVGACGNGSPNESRDDVNLFS. A Ubiquitin-like domain is found at 285-364; that stretch reads VKLRIKSFRV…HLDSLGFSLE (80 aa). Residues 394–413 form a disordered region; it reads ALDSSHEPEPSPADSFGKLG. Residues 448-507 form the HTH myb-type domain; that stretch reads AQRRIRRPFSVTEVEALVQAVEKLGTGRWRDVKVRAFEDADHRTYVDLKDKWKTLVHTAR. The segment at residues 476-503 is a DNA-binding region (H-T-H motif); the sequence is WRDVKVRAFEDADHRTYVDLKDKWKTLV.

Homodimer and heterodimer with TRP1. Interacts with SNL1. In terms of tissue distribution, expressed ubiquitously. Highest expression in flowers and leaves.

Its subcellular location is the nucleus. In terms of biological role, binds specifically to the plant telomeric double-stranded DNA sequences. At least 2 repeats of telomeric sequences are required for binding. Induces DNA bending. The protein is Telomere repeat-binding protein 2 (TRP2) of Arabidopsis thaliana (Mouse-ear cress).